Here is a 276-residue protein sequence, read N- to C-terminus: Formamidopyrimidine-DNA glycosylase (276 aa).

Catalysis depends on proline 2, which acts as the Schiff-base intermediate with DNA. Glutamate 3 (proton donor) is an active-site residue. Lysine 58 (proton donor; for beta-elimination activity) is an active-site residue. Histidine 94, arginine 112, and arginine 157 together coordinate DNA. The FPG-type zinc finger occupies 242-276; sequence FVYDRAGQPCRVCGTPIKQIVQGQRSTYYCPTCQR. Catalysis depends on arginine 266, which acts as the Proton donor; for delta-elimination activity.

It belongs to the FPG family. As to quaternary structure, monomer. Requires Zn(2+) as cofactor.

It catalyses the reaction Hydrolysis of DNA containing ring-opened 7-methylguanine residues, releasing 2,6-diamino-4-hydroxy-5-(N-methyl)formamidopyrimidine.. The catalysed reaction is 2'-deoxyribonucleotide-(2'-deoxyribose 5'-phosphate)-2'-deoxyribonucleotide-DNA = a 3'-end 2'-deoxyribonucleotide-(2,3-dehydro-2,3-deoxyribose 5'-phosphate)-DNA + a 5'-end 5'-phospho-2'-deoxyribonucleoside-DNA + H(+). Its function is as follows. Involved in base excision repair of DNA damaged by oxidation or by mutagenic agents. Acts as a DNA glycosylase that recognizes and removes damaged bases. Has a preference for oxidized purines, such as 7,8-dihydro-8-oxoguanine (8-oxoG). Has AP (apurinic/apyrimidinic) lyase activity and introduces nicks in the DNA strand. Cleaves the DNA backbone by beta-delta elimination to generate a single-strand break at the site of the removed base with both 3'- and 5'-phosphates. This chain is Formamidopyrimidine-DNA glycosylase, found in Paraburkholderia phymatum (strain DSM 17167 / CIP 108236 / LMG 21445 / STM815) (Burkholderia phymatum).